The sequence spans 156 residues: Small ribosomal subunit protein uS7 (156 aa).

As to quaternary structure, part of the 30S ribosomal subunit. Contacts proteins S9 and S11.

In terms of biological role, one of the primary rRNA binding proteins, it binds directly to 16S rRNA where it nucleates assembly of the head domain of the 30S subunit. Is located at the subunit interface close to the decoding center, probably blocks exit of the E-site tRNA. The protein is Small ribosomal subunit protein uS7 of Rhodopseudomonas palustris (strain ATCC BAA-98 / CGA009).